We begin with the raw amino-acid sequence, 111 residues long: Universal stress protein B (111 aa).

2 consecutive transmembrane segments (helical) span residues 1-21 (MISTVALFWALFLVCVINMAR) and 90-110 (FILTSALCGLVIISLIGLMIW).

This sequence belongs to the universal stress protein B family.

Its subcellular location is the cell inner membrane. The sequence is that of Universal stress protein B from Cronobacter sakazakii (strain ATCC BAA-894) (Enterobacter sakazakii).